The chain runs to 950 residues: Translation initiation factor IF-2 (950 aa).

Composition is skewed to basic and acidic residues over residues 128–158, 165–186, 200–234, and 291–312; these read KPKVAEPVKKSEPKAAAKAEETKVEKVEAKA, AEVKTENVADKKEPVVTEEKKK, KRAEDIKKEQAAARPEKKKFDKNRNDRNNRNDNRR, and NRRDRDRKKTDSNRDNTKDGNR. The tract at residues 128–354 is disordered; sequence KPKVAEPVKK…NNQSSSVPAT (227 aa). Composition is skewed to polar residues over residues 322–336 and 343–353; these read NRNQVRNARNSNWNQ and YQNNQSSSVPA. Residues 448–619 form the tr-type G domain; that stretch reads ERPAVVTIMG…LLVAEVQELK (172 aa). Positions 457 to 464 are G1; it reads GHVDHGKT. Residue 457-464 participates in GTP binding; the sequence is GHVDHGKT. The tract at residues 482–486 is G2; sequence GITQH. Residues 503-506 are G3; the sequence is DTPG. Residues 503–507 and 557–560 contribute to the GTP site; these read DTPGH and NKID. The G4 stretch occupies residues 557 to 560; it reads NKID. Positions 595 to 597 are G5; it reads SAK.

It belongs to the TRAFAC class translation factor GTPase superfamily. Classic translation factor GTPase family. IF-2 subfamily.

It localises to the cytoplasm. Functionally, one of the essential components for the initiation of protein synthesis. Protects formylmethionyl-tRNA from spontaneous hydrolysis and promotes its binding to the 30S ribosomal subunits. Also involved in the hydrolysis of GTP during the formation of the 70S ribosomal complex. This chain is Translation initiation factor IF-2, found in Lactococcus lactis subsp. cremoris (strain MG1363).